Here is a 352-residue protein sequence, read N- to C-terminus: Biotin synthase (352 aa).

In terms of domain architecture, Radical SAM core spans 44–262 (NRVQVSTLLS…LAVARILMPK (219 aa)). C59, C63, and C66 together coordinate [4Fe-4S] cluster. Residues C103, C134, C194, and R266 each coordinate [2Fe-2S] cluster.

Belongs to the radical SAM superfamily. Biotin synthase family. As to quaternary structure, homodimer. The cofactor is [4Fe-4S] cluster. [2Fe-2S] cluster is required as a cofactor.

It catalyses the reaction (4R,5S)-dethiobiotin + (sulfur carrier)-SH + 2 reduced [2Fe-2S]-[ferredoxin] + 2 S-adenosyl-L-methionine = (sulfur carrier)-H + biotin + 2 5'-deoxyadenosine + 2 L-methionine + 2 oxidized [2Fe-2S]-[ferredoxin]. It participates in cofactor biosynthesis; biotin biosynthesis; biotin from 7,8-diaminononanoate: step 2/2. In terms of biological role, catalyzes the conversion of dethiobiotin (DTB) to biotin by the insertion of a sulfur atom into dethiobiotin via a radical-based mechanism. This Pseudomonas entomophila (strain L48) protein is Biotin synthase.